Reading from the N-terminus, the 209-residue chain is Ubiquitin-conjugating enzyme E2 S (209 aa).

In terms of domain architecture, UBC core spans 14 to 160 (QTIRQVMREL…ARMMTEIHAQ (147 aa)). Cysteine 98 acts as the Glycyl thioester intermediate in catalysis. Residues 164–209 (CAAGAAGDSKDDDGPSTKKHAGLDKKLQDKKKEKLLKEKKRMLKRL) are disordered. Basic and acidic residues predominate over residues 171-199 (DSKDDDGPSTKKHAGLDKKLQDKKKEKLL). Basic residues predominate over residues 200-209 (KEKKRMLKRL).

It belongs to the ubiquitin-conjugating enzyme family.

The enzyme catalyses S-ubiquitinyl-[E1 ubiquitin-activating enzyme]-L-cysteine + [E2 ubiquitin-conjugating enzyme]-L-cysteine = [E1 ubiquitin-activating enzyme]-L-cysteine + S-ubiquitinyl-[E2 ubiquitin-conjugating enzyme]-L-cysteine.. It participates in protein modification; protein ubiquitination. In terms of biological role, catalyzes the covalent attachment of ubiquitin to other proteins. Acts as an essential factor of the anaphase promoting complex/cyclosome (APC/C), a cell cycle-regulated ubiquitin ligase that controls progression through mitosis. Acts by specifically elongating polyubiquitin chains initiated by the E2 enzyme vih/UbcH10 on APC/C substrates, enhancing the degradation of APC/C substrates by the proteasome and promoting mitotic exit. In Drosophila ananassae (Fruit fly), this protein is Ubiquitin-conjugating enzyme E2 S.